Reading from the N-terminus, the 107-residue chain is High mobility group protein HMG-I/HMG-Y (107 aa).

Over residues 1–13 (MSESVSKSSQPLA) the composition is skewed to polar residues. The disordered stretch occupies residues 1–107 (MSESVSKSSQ…ISQESSEEEQ (107 aa)). Position 2 is an N-acetylserine (Ser2). Lys7 bears the N6-acetyllysine mark. At Ser8 the chain carries ADP-ribosylserine. Ser9 carries the post-translational modification ADP-ribosylserine; alternate. Ser9 is modified (phosphoserine; alternate). An N6-acetyllysine; alternate modification is found at Lys15. Residue Lys15 forms a Glycyl lysine isopeptide (Lys-Gly) (interchain with G-Cter in SUMO2); alternate linkage. Basic and acidic residues predominate over residues 15 to 24 (KQEKDGTEKR). A DNA-binding region (a.T hook 1) is located at residues 21–31 (TEKRGRGRPRK). Arg26 is modified (asymmetric dimethylarginine; alternate). The residue at position 26 (Arg26) is an Omega-N-methylarginine; alternate. The residue at position 26 (Arg26) is a Symmetric dimethylarginine; alternate. Ser36 is subject to Phosphoserine; by HIPK2 and CDC2. Thr39 bears the Phosphothreonine mark. Phosphoserine occurs at positions 44 and 49. Thr53 carries the phosphothreonine; by HIPK2 and CDC2 modification. 2 DNA-binding regions (a.T hook) span residues 53-63 (TPKRPRGRPKG) and 78-89 (TPGRKPRGRPKK). The tract at residues 53 to 77 (TPKRPRGRPKGSKNKGTAKTRKVTT) is interaction with HIPK2. The span at 55-74 (KRPRGRPKGSKNKGTAKTRK) shows a compositional bias: basic residues. Residues Arg58 and Arg60 each carry the asymmetric dimethylarginine; by PRMT6; alternate modification. An omega-N-methylarginine; by PRMT6; alternate mark is found at Arg58 and Arg60. Thr78 carries the post-translational modification Phosphothreonine; by HIPK2 and CDC2. A compositionally biased stretch (acidic residues) spans 93–107 (EEEEGISQESSEEEQ). Phosphoserine is present on residues Ser99, Ser102, and Ser103.

The protein belongs to the HMGA family. Interacts with HIPK2. In terms of processing, isoforms HMG-I and HMG-Y can be phosphorylated by HIPK2. Phosphorylation may modulate DNA-binding affinity. Methylation at Arg-58 is mutually exclusive with methylation at Arg-60.

It is found in the nucleus. The protein resides in the chromosome. Functionally, HMG-I/Y bind preferentially to the minor groove of A+T rich regions in double-stranded DNA. It is suggested that these proteins could function in nucleosome phasing and in the 3'-end processing of mRNA transcripts. They are also involved in the transcription regulation of genes containing, or in close proximity to A+T-rich regions. This is High mobility group protein HMG-I/HMG-Y (Hmga1) from Rattus norvegicus (Rat).